The primary structure comprises 483 residues: Zinc metalloproteinase/disintegrin (483 aa).

Residues Met1–Ser20 form the signal peptide. Positions Ile21–Glu190 are excised as a propeptide. Residues Arg197–Pro395 enclose the Peptidase M12B domain. 3 disulfides stabilise this stretch: Cys308–Cys390, Cys352–Cys374, and Cys354–Cys357. Position 333 (His333) interacts with Zn(2+). Glu334 is an active-site residue. Zn(2+)-binding residues include His337 and His343. Positions Leu396 to Leu411 are excised as a propeptide. The Disintegrin domain occupies Thr403–Leu483. Cystine bridges form between Cys417-Cys432, Cys419-Cys427, Cys426-Cys449, Cys440-Cys446, Cys445-Cys470, and Cys458-Cys477. The Cell attachment site motif lies at Arg462–Asp464.

The protein belongs to the venom metalloproteinase (M12B) family. P-II subfamily. P-IIa sub-subfamily. As to quaternary structure, monomer. It depends on Zn(2+) as a cofactor. As to expression, expressed by the venom gland.

Its subcellular location is the secreted. Functionally, impairs hemostasis in the envenomed animal. Its function is as follows. Inhibits ADP- and collagen-induced human platelet aggregation with IC(50) of 123 and 135 nM, respectively. Inhibits sperm-egg binding in a concentration-dependent manner, but has no effect on the fusion of sperm-egg. The protein is Zinc metalloproteinase/disintegrin of Protobothrops jerdonii (Jerdon's pitviper).